We begin with the raw amino-acid sequence, 165 residues long: Large ribosomal subunit protein uL10 (165 aa).

It belongs to the universal ribosomal protein uL10 family. Part of the ribosomal stalk of the 50S ribosomal subunit. The N-terminus interacts with L11 and the large rRNA to form the base of the stalk. The C-terminus forms an elongated spine to which L12 dimers bind in a sequential fashion forming a multimeric L10(L12)X complex.

Forms part of the ribosomal stalk, playing a central role in the interaction of the ribosome with GTP-bound translation factors. The polypeptide is Large ribosomal subunit protein uL10 (Serratia proteamaculans (strain 568)).